The primary structure comprises 1172 residues: Carbamoyl phosphate synthase arginine-specific large chain, chloroplastic (1172 aa).

Residues 1 to 10 (MATSLSSAPT) are compositionally biased toward polar residues. The segment at 1-37 (MATSLSSAPTQLRPSPSPSHHRLLHRSSLLPFPRRHH) is disordered. Residues 1–50 (MATSLSSAPTQLRPSPSPSHHRLLHRSSLLPFPRRHHHRRRRCGALSIAR) constitute a chloroplast transit peptide. A carboxyphosphate synthetic domain region spans residues 72–473 (GRLAGVRKIM…SFQKAVRSLE (402 aa)). Residues R199, R240, G246, G247, K279, L281, E286, G312, V313, H314, Q356, and E370 each contribute to the ATP site. The ATP-grasp 1 domain maps to 203–399 (KQAMDRIGLK…IAKMAAKLSV (197 aa)). Q356, E370, and N372 together coordinate Mg(2+). An oligomerization domain region spans residues 474–623 (TGFAGWGCAP…YSSYEYECES (150 aa)). The carbamoyl phosphate synthetic domain stretch occupies residues 624 to 1019 (VPTNKKKVLI…GAFAKAQIAA (396 aa)). An ATP-grasp 2 domain is found at 761–954 (NAILEELGIE…LAKYASLVMS (194 aa)). Residues R797, K836, L838, E843, G869, I870, H871, S872, Q912, and E925 each coordinate ATP. Q912, E925, and N927 together coordinate Mg(2+). The tract at residues 1020 to 1172 (GQKLPLNGTV…QNLQAAQSAS (153 aa)) is allosteric domain. Residues 1021-1162 (QKLPLNGTVF…QDYFQTTDAS (142 aa)) form the MGS-like domain.

This sequence belongs to the CarB family. Heterodimer composed of 2 chains; the small (or glutamine) chain promotes the hydrolysis of glutamine to ammonia, which is used by the large (or ammonia) chain to synthesize carbamoyl phosphate. Mg(2+) is required as a cofactor. The cofactor is Mn(2+).

The protein resides in the plastid. Its subcellular location is the chloroplast. It catalyses the reaction hydrogencarbonate + L-glutamine + 2 ATP + H2O = carbamoyl phosphate + L-glutamate + 2 ADP + phosphate + 2 H(+). The enzyme catalyses hydrogencarbonate + NH4(+) + 2 ATP = carbamoyl phosphate + 2 ADP + phosphate + 2 H(+). Its pathway is amino-acid biosynthesis; L-arginine biosynthesis; carbamoyl phosphate from bicarbonate: step 1/1. In terms of biological role, large subunit of the arginine-specific carbamoyl phosphate synthase (CPSase). CPSase catalyzes the formation of carbamoyl phosphate from the ammonia moiety of glutamine, hydrogencarbonate, and phosphate donated by ATP, constituting the first step of 2 biosynthetic pathways, one leading to arginine and/or urea and the other to pyrimidine nucleotides. The large subunit (synthetase) binds the substrates ammonia (free or transferred from glutamine from the small subunit), hydrogencarbonate and ATP and carries out an ATP-coupled ligase reaction, activating hydrogencarbonate by forming carboxy phosphate which reacts with ammonia to form carbamoyl phosphate. In Oryza sativa subsp. japonica (Rice), this protein is Carbamoyl phosphate synthase arginine-specific large chain, chloroplastic (CARB).